The primary structure comprises 78 residues: Small ribosomal subunit protein bS21A (78 aa).

Basic and acidic residues predominate over residues 30–52 (MKARSAYEKPSEKRAREKGEAVR). Residues 30-78 (MKARSAYEKPSEKRAREKGEAVRRQRKLARKKLQREGLLPAPKKAVRAR) are disordered. Residues 53 to 62 (RQRKLARKKL) show a composition bias toward basic residues.

It belongs to the bacterial ribosomal protein bS21 family.

The sequence is that of Small ribosomal subunit protein bS21A from Rhizobium etli (strain ATCC 51251 / DSM 11541 / JCM 21823 / NBRC 15573 / CFN 42).